Here is a 525-residue protein sequence, read N- to C-terminus: Alpha-ketoglutaric semialdehyde dehydrogenase 2 (525 aa).

Residues lysine 185, glutamate 188, and 242-247 contribute to the NAD(+) site; that span reads GSRQGG. The Proton acceptor role is filled by glutamate 266. Cysteine 303 acts as the Nucleophile in catalysis. Glutamate 394 lines the NAD(+) pocket.

This sequence belongs to the aldehyde dehydrogenase family. As to quaternary structure, homodimer.

It carries out the reaction 2,5-dioxopentanoate + NADP(+) + H2O = 2-oxoglutarate + NADPH + 2 H(+). It catalyses the reaction 2,5-dioxopentanoate + NAD(+) + H2O = 2-oxoglutarate + NADH + 2 H(+). It participates in carbohydrate acid metabolism; D-glucarate degradation. It functions in the pathway carbohydrate acid metabolism; galactarate degradation. In terms of biological role, catalyzes the NAD(P)(+)-dependent oxidation of alpha-ketoglutaric semialdehyde (alphaKGSA) to alpha-ketoglutarate. Involved in D-glucarate/D-galactarate metabolism. Prefers NAD(+) to NADP(+) as a cosubstrate. This is Alpha-ketoglutaric semialdehyde dehydrogenase 2 from Azospirillum brasilense.